We begin with the raw amino-acid sequence, 441 residues long: Cobyrinate a,c-diamide synthase (441 aa).

A GATase cobBQ-type domain is found at 243 to 434; the sequence is TVAVADDAAF…AHVHPESTAF (192 aa). Cysteine 323 functions as the Nucleophile in the catalytic mechanism.

This sequence belongs to the CobB/CbiA family. Requires Mg(2+) as cofactor.

It catalyses the reaction cob(II)yrinate + 2 L-glutamine + 2 ATP + 2 H2O = cob(II)yrinate a,c diamide + 2 L-glutamate + 2 ADP + 2 phosphate + 2 H(+). Its pathway is cofactor biosynthesis; adenosylcobalamin biosynthesis; cob(II)yrinate a,c-diamide from sirohydrochlorin (anaerobic route): step 10/10. Its function is as follows. Catalyzes the ATP-dependent amidation of the two carboxylate groups at positions a and c of cobyrinate, using either L-glutamine or ammonia as the nitrogen source. This Halobacterium salinarum (strain ATCC 700922 / JCM 11081 / NRC-1) (Halobacterium halobium) protein is Cobyrinate a,c-diamide synthase.